The sequence spans 123 residues: Small ribosomal subunit protein uS12c (123 aa).

Residues 9–31 (RNKRQAAENKTKSPALQRSPQRR) form a disordered region.

Belongs to the universal ribosomal protein uS12 family. Part of the 30S ribosomal subunit.

It is found in the plastid. The protein resides in the chloroplast. With S4 and S5 plays an important role in translational accuracy. Located at the interface of the 30S and 50S subunits. This is Small ribosomal subunit protein uS12c (rps12) from Spirogyra maxima (Green alga).